Here is a 538-residue protein sequence, read N- to C-terminus: Fusion glycoprotein F0 (538 aa).

The N-terminal stretch at Met-1–Cys-19 is a signal peptide. Asn-56 and Asn-73 each carry an N-linked (GlcNAc...) asparagine; by host glycan. The fusion peptide stretch occupies residues Phe-103–Leu-127. Asn-182 is a glycosylation site (N-linked (GlcNAc...) asparagine; by host). 4 disulfides stabilise this stretch: Cys-324–Cys-333, Cys-348–Cys-356, Cys-380–Cys-385, and Cys-387–Cys-410. An N-linked (GlcNAc...) asparagine; by host glycan is attached at Asn-352. Asn-427, Asn-433, and Asn-457 each carry an N-linked (GlcNAc...) asparagine; by host glycan. A helical membrane pass occupies residues Ile-483–Leu-503.

The protein belongs to the paramyxoviruses fusion glycoprotein family. Homotrimer; disulfide-linked F1-F2. Interacts with host LAMP1; LAMP2 and LAMP3; these interactions promote the cleavage of the viral fusion protein F. The inactive precursor F0 is glycosylated and proteolytically cleaved into F1 and F2 to be functionally active. The cleavage is mediated by cellular proteases including host FURIN during the transport and maturation of the polypeptide.

It localises to the virion membrane. It is found in the host cell membrane. Its function is as follows. Class I viral fusion protein. Under the current model, the protein has at least 3 conformational states: pre-fusion native state, pre-hairpin intermediate state, and post-fusion hairpin state. During viral and plasma cell membrane fusion, the heptad repeat (HR) regions assume a trimer-of-hairpins structure, positioning the fusion peptide in close proximity to the C-terminal region of the ectodomain. The formation of this structure appears to drive apposition and subsequent fusion of viral and plasma cell membranes. Directs fusion of viral and cellular membranes leading to delivery of the nucleocapsid into the cytoplasm. This fusion is pH independent and occurs directly at the outer cell membrane. The trimer of F1-F2 (F protein) probably interacts with HN at the virion surface. Upon HN binding to its cellular receptor, the hydrophobic fusion peptide is unmasked and interacts with the cellular membrane, inducing the fusion between cell and virion membranes. Later in infection, F proteins expressed at the plasma membrane of infected cells could mediate fusion with adjacent cells to form syncytia, a cytopathic effect that could lead to tissue necrosis. The polypeptide is Fusion glycoprotein F0 (F) (Mumps virus (strain Kilham) (MuV)).